The chain runs to 81 residues: Large ribosomal subunit protein bL31B (81 aa).

It belongs to the bacterial ribosomal protein bL31 family. Type B subfamily. In terms of assembly, part of the 50S ribosomal subunit.

In Pediococcus pentosaceus (strain ATCC 25745 / CCUG 21536 / LMG 10740 / 183-1w), this protein is Large ribosomal subunit protein bL31B.